We begin with the raw amino-acid sequence, 284 residues long: Parvulin-like PPIase (284 aa).

The signal sequence occupies residues 1 to 20; that stretch reads MKKLSIVLLSVSMLSSIAFA. The 94-residue stretch at 139–232 folds into the PpiC domain; sequence KEQIKVAHIL…YGWHIIKVLE (94 aa).

It belongs to the PpiC/parvulin rotamase family.

Its subcellular location is the cell outer membrane. It catalyses the reaction [protein]-peptidylproline (omega=180) = [protein]-peptidylproline (omega=0). The chain is Parvulin-like PPIase (plp) from Rickettsia bellii (strain RML369-C).